Here is a 329-residue protein sequence, read N- to C-terminus: DNA-directed RNA polymerase subunit alpha (329 aa).

Positions 1–235 (MQNSIMDFLR…EQLEAFVDLR (235 aa)) are alpha N-terminal domain (alpha-NTD). The tract at residues 249–329 (FEPILLRPVD…NWPPSSILDE (81 aa)) is alpha C-terminal domain (alpha-CTD).

This sequence belongs to the RNA polymerase alpha chain family. In terms of assembly, homodimer. The RNAP catalytic core consists of 2 alpha, 1 beta, 1 beta' and 1 omega subunit. When a sigma factor is associated with the core the holoenzyme is formed, which can initiate transcription.

The enzyme catalyses RNA(n) + a ribonucleoside 5'-triphosphate = RNA(n+1) + diphosphate. Its function is as follows. DNA-dependent RNA polymerase catalyzes the transcription of DNA into RNA using the four ribonucleoside triphosphates as substrates. The chain is DNA-directed RNA polymerase subunit alpha from Buchnera aphidicola subsp. Acyrthosiphon pisum (strain APS) (Acyrthosiphon pisum symbiotic bacterium).